Here is a 369-residue protein sequence, read N- to C-terminus: Cystathionine gamma-synthase (369 aa).

N6-(pyridoxal phosphate)lysine is present on Lys-200.

Belongs to the trans-sulfuration enzymes family. In terms of assembly, homotetramer. It depends on pyridoxal 5'-phosphate as a cofactor.

It localises to the cytoplasm. It carries out the reaction O-succinyl-L-homoserine + L-cysteine = L,L-cystathionine + succinate + H(+). Functionally, catalyzes the formation of L-cystathionine from O-succinyl-L-homoserine (OSHS) and L-cysteine, via a gamma-replacement reaction. In the absence of thiol, catalyzes gamma-elimination to form 2-oxobutanoate, succinate and ammonia. This Haemophilus influenzae (strain ATCC 51907 / DSM 11121 / KW20 / Rd) protein is Cystathionine gamma-synthase (metB).